A 244-amino-acid chain; its full sequence is Myrosinase MB1 (244 aa).

Asn-32 carries N-linked (GlcNAc...) asparagine glycosylation. Residue Tyr-51 participates in substrate binding. Catalysis depends on Glu-125, which acts as the Nucleophile. Residues Trp-173 and 180–181 each bind substrate; that span reads EF. An N-linked (GlcNAc...) asparagine glycan is attached at Asn-216.

The protein belongs to the glycosyl hydrolase 1 family. As to quaternary structure, homodimer. In vacuoles called myrosin grains of a certain class of cells, myrosin cells, distributed in the cotyledons and the axis of the embryo as well as in different organs of the growing plant.

Its subcellular location is the vacuole. It carries out the reaction a thioglucoside + H2O = a sugar + a thiol.. Degradation of glucosinolates (glucose residue linked by a thioglucoside bound to an amino acid derivative) to glucose, sulfate and any of the products: thiocyanates, isothiocyanates, nitriles, epithionitriles or oxazolidine-2-thiones. The polypeptide is Myrosinase MB1 (Sinapis alba (White mustard)).